Here is a 238-residue protein sequence, read N- to C-terminus: Ribosomal RNA small subunit methyltransferase G (238 aa).

Residues G78, 129-130 (AE), and R148 each bind S-adenosyl-L-methionine.

Belongs to the methyltransferase superfamily. RNA methyltransferase RsmG family.

The protein resides in the cytoplasm. In terms of biological role, specifically methylates the N7 position of a guanine in 16S rRNA. The polypeptide is Ribosomal RNA small subunit methyltransferase G (Caldicellulosiruptor bescii (strain ATCC BAA-1888 / DSM 6725 / KCTC 15123 / Z-1320) (Anaerocellum thermophilum)).